The chain runs to 560 residues: Nitrite reductase (560 aa).

Positions 1–26 (MSNVGKPILAGLIAGLSLLGLAVAQA) are cleaved as a signal peptide. The N-terminal tail stretch occupies residues 27–29 (AAP). In terms of domain architecture, Cytochrome c spans 30–126 (EMTAEEKEAS…ARYIQHTPDI (97 aa)). 3 residues coordinate heme c: C47, C50, and H51. The interval 61-80 (KNLEPHWSKTEADGKKTEGG) is disordered. Residues 63-78 (LEPHWSKTEADGKKTE) are compositionally biased toward basic and acidic residues. Heme c-binding residues include T97 and M101. Positions 127–560 (PPEFSLQDMK…NVFNTMNDVY (434 aa)) are D1-heme domain. Heme d1 is bound by residues H193, R236, S237, Y256, R382, and Q500.

Homodimer in solution. The cofactor is heme c. Heme is required as a cofactor.

The protein localises to the periplasm. The enzyme catalyses nitric oxide + Fe(III)-[cytochrome c] + H2O = Fe(II)-[cytochrome c] + nitrite + 2 H(+). The catalysed reaction is A + NH4(+) + H2O = hydroxylamine + AH2 + H(+). In Stutzerimonas stutzeri (Pseudomonas stutzeri), this protein is Nitrite reductase (nirS).